Here is a 338-residue protein sequence, read N- to C-terminus: Outer membrane transporter protein TsaT (338 aa).

Residues Met-1–Ala-22 form the signal peptide.

Part of a two-component transport system composed of TsaT and TsaS.

The protein resides in the cell outer membrane. In terms of biological role, involved in the uptake of p-toluenesulphonate (TSA). Forms a large, general diffusion pore with a preference for anions. In Comamonas testosteroni (Pseudomonas testosteroni), this protein is Outer membrane transporter protein TsaT (tsaT).